The following is a 341-amino-acid chain: Anthranilate phosphoribosyltransferase (341 aa).

5-phospho-alpha-D-ribose 1-diphosphate is bound by residues Gly84, 87-88, Thr92, 94-97, 112-120, and Ser124; these read GD, NVTT, and KCGNRSVSS. An anthranilate-binding site is contributed by Gly84. Mg(2+) is bound at residue Thr96. An anthranilate-binding site is contributed by Asn115. Arg170 contacts anthranilate. 2 residues coordinate Mg(2+): Asp228 and Glu229.

The protein belongs to the anthranilate phosphoribosyltransferase family. Homodimer. It depends on Mg(2+) as a cofactor.

It catalyses the reaction N-(5-phospho-beta-D-ribosyl)anthranilate + diphosphate = 5-phospho-alpha-D-ribose 1-diphosphate + anthranilate. The protein operates within amino-acid biosynthesis; L-tryptophan biosynthesis; L-tryptophan from chorismate: step 2/5. Its function is as follows. Catalyzes the transfer of the phosphoribosyl group of 5-phosphorylribose-1-pyrophosphate (PRPP) to anthranilate to yield N-(5'-phosphoribosyl)-anthranilate (PRA). This chain is Anthranilate phosphoribosyltransferase, found in Corynebacterium diphtheriae (strain ATCC 700971 / NCTC 13129 / Biotype gravis).